The following is a 493-amino-acid chain: Guanosine-5'-triphosphate,3'-diphosphate pyrophosphatase (493 aa).

Belongs to the GppA/Ppx family. GppA subfamily.

The enzyme catalyses guanosine 3'-diphosphate 5'-triphosphate + H2O = guanosine 3',5'-bis(diphosphate) + phosphate + H(+). It participates in purine metabolism; ppGpp biosynthesis; ppGpp from GTP: step 2/2. In terms of biological role, catalyzes the conversion of pppGpp to ppGpp. Guanosine pentaphosphate (pppGpp) is a cytoplasmic signaling molecule which together with ppGpp controls the 'stringent response', an adaptive process that allows bacteria to respond to amino acid starvation, resulting in the coordinated regulation of numerous cellular activities. This chain is Guanosine-5'-triphosphate,3'-diphosphate pyrophosphatase, found in Salmonella dublin (strain CT_02021853).